Reading from the N-terminus, the 337-residue chain is Methylthioribose-1-phosphate isomerase (337 aa).

Substrate is bound by residues 47-49 (RGA), Arg-81, and Gln-184. The active-site Proton donor is Asp-225. 235–236 (NK) provides a ligand contact to substrate.

This sequence belongs to the eIF-2B alpha/beta/delta subunits family. MtnA subfamily.

It catalyses the reaction 5-(methylsulfanyl)-alpha-D-ribose 1-phosphate = 5-(methylsulfanyl)-D-ribulose 1-phosphate. It functions in the pathway amino-acid biosynthesis; L-methionine biosynthesis via salvage pathway; L-methionine from S-methyl-5-thio-alpha-D-ribose 1-phosphate: step 1/6. Functionally, catalyzes the interconversion of methylthioribose-1-phosphate (MTR-1-P) into methylthioribulose-1-phosphate (MTRu-1-P). The sequence is that of Methylthioribose-1-phosphate isomerase from Parasynechococcus marenigrum (strain WH8102).